Here is a 151-residue protein sequence, read N- to C-terminus: Small ribosomal subunit protein uS15 (151 aa).

This sequence belongs to the universal ribosomal protein uS15 family.

The polypeptide is Small ribosomal subunit protein uS15 (RpS13) (Choristoneura parallela (Spotted fireworm moth)).